A 434-amino-acid polypeptide reads, in one-letter code: ATP phosphoribosyltransferase regulatory subunit (434 aa).

This sequence belongs to the class-II aminoacyl-tRNA synthetase family. HisZ subfamily. In terms of assembly, heteromultimer composed of HisG and HisZ subunits.

The protein resides in the cytoplasm. The protein operates within amino-acid biosynthesis; L-histidine biosynthesis; L-histidine from 5-phospho-alpha-D-ribose 1-diphosphate: step 1/9. In terms of biological role, required for the first step of histidine biosynthesis. May allow the feedback regulation of ATP phosphoribosyltransferase activity by histidine. This is ATP phosphoribosyltransferase regulatory subunit from Geobacter metallireducens (strain ATCC 53774 / DSM 7210 / GS-15).